The sequence spans 197 residues: Pyridoxal 5'-phosphate synthase subunit PdxT (197 aa).

53–55 (GES) is an L-glutamine binding site. The Nucleophile role is filled by C85. Residues R114 and 142–143 (IR) contribute to the L-glutamine site. Catalysis depends on charge relay system residues H179 and E181.

Belongs to the glutaminase PdxT/SNO family. In terms of assembly, in the presence of PdxS, forms a dodecamer of heterodimers. Only shows activity in the heterodimer.

It catalyses the reaction aldehydo-D-ribose 5-phosphate + D-glyceraldehyde 3-phosphate + L-glutamine = pyridoxal 5'-phosphate + L-glutamate + phosphate + 3 H2O + H(+). The catalysed reaction is L-glutamine + H2O = L-glutamate + NH4(+). It functions in the pathway cofactor biosynthesis; pyridoxal 5'-phosphate biosynthesis. In terms of biological role, catalyzes the hydrolysis of glutamine to glutamate and ammonia as part of the biosynthesis of pyridoxal 5'-phosphate. The resulting ammonia molecule is channeled to the active site of PdxS. The polypeptide is Pyridoxal 5'-phosphate synthase subunit PdxT (Thermococcus onnurineus (strain NA1)).